The primary structure comprises 217 residues: Phosphatidylserine decarboxylase proenzyme (217 aa).

Ser-183 functions as the Schiff-base intermediate with substrate; via pyruvic acid in the catalytic mechanism. The residue at position 183 (Ser-183) is a Pyruvic acid (Ser); by autocatalysis.

It belongs to the phosphatidylserine decarboxylase family. PSD-A subfamily. In terms of assembly, heterodimer of a large membrane-associated beta subunit and a small pyruvoyl-containing alpha subunit. It depends on pyruvate as a cofactor. Post-translationally, is synthesized initially as an inactive proenzyme. Formation of the active enzyme involves a self-maturation process in which the active site pyruvoyl group is generated from an internal serine residue via an autocatalytic post-translational modification. Two non-identical subunits are generated from the proenzyme in this reaction, and the pyruvate is formed at the N-terminus of the alpha chain, which is derived from the carboxyl end of the proenzyme. The post-translation cleavage follows an unusual pathway, termed non-hydrolytic serinolysis, in which the side chain hydroxyl group of the serine supplies its oxygen atom to form the C-terminus of the beta chain, while the remainder of the serine residue undergoes an oxidative deamination to produce ammonia and the pyruvoyl prosthetic group on the alpha chain.

The protein localises to the cell membrane. The enzyme catalyses a 1,2-diacyl-sn-glycero-3-phospho-L-serine + H(+) = a 1,2-diacyl-sn-glycero-3-phosphoethanolamine + CO2. It functions in the pathway phospholipid metabolism; phosphatidylethanolamine biosynthesis; phosphatidylethanolamine from CDP-diacylglycerol: step 2/2. In terms of biological role, catalyzes the formation of phosphatidylethanolamine (PtdEtn) from phosphatidylserine (PtdSer). This is Phosphatidylserine decarboxylase proenzyme from Cupriavidus pinatubonensis (strain JMP 134 / LMG 1197) (Cupriavidus necator (strain JMP 134)).